The following is a 323-amino-acid chain: MKPENKIPVLTRLSDEMTAVVNFQQPGLPPWPADGDIETQRQYYLLERRFWNADAPSMTTRTCVVPTPYGDVTTRLYSPQPTSQATLYYLHGGGFILGNLDTHDRIMRLLARYTGCTVIGIDYSLSPQARYPQAIEETVAVCSYFSQHADEYSLNVEKIGFAGDSAGAMLALASALWLRDKHIRCGNVIAILLWYGLYGLQDSVSRRLFGGAWDGLTREDLDMYEKAYLRNEDDRESPWYCLFNNDLTRDVPPCFIASAEFDPLIDDSRLLHQTLQAHQQPCEYKMYPGTLHAFLHYSRMMTIADDALQDGARFFMARMKTPR.

An Involved in the stabilization of the negatively charged intermediate by the formation of the oxyanion hole motif is present at residues 91-93; that stretch reads HGG. Residues Ser165, Asp262, and His292 contribute to the active site.

This sequence belongs to the 'GDXG' lipolytic enzyme family. In terms of assembly, homodimer. Interacts with MalT and MelA.

It is found in the cytoplasm. Displays esterase activity towards short chain fatty esters (acyl chain length of up to 8 carbons). Able to hydrolyze triacetylglycerol (triacetin) and tributyrylglycerol (tributyrin), but not trioleylglycerol (triolein) or cholesterol oleate. Negatively regulates MalT activity by antagonizing maltotriose binding. Inhibits MelA galactosidase activity. This is Acetyl esterase from Salmonella paratyphi B (strain ATCC BAA-1250 / SPB7).